The chain runs to 142 residues: Large ribosomal subunit protein uL11 (142 aa).

This sequence belongs to the universal ribosomal protein uL11 family. As to quaternary structure, part of the ribosomal stalk of the 50S ribosomal subunit. Interacts with L10 and the large rRNA to form the base of the stalk. L10 forms an elongated spine to which L12 dimers bind in a sequential fashion forming a multimeric L10(L12)X complex. Post-translationally, one or more lysine residues are methylated.

In terms of biological role, forms part of the ribosomal stalk which helps the ribosome interact with GTP-bound translation factors. In Yersinia pseudotuberculosis serotype O:1b (strain IP 31758), this protein is Large ribosomal subunit protein uL11.